A 728-amino-acid polypeptide reads, in one-letter code: Meiotic sister-chromatid recombination protein 3 (728 aa).

Disordered regions lie at residues 33-171, 236-261, 300-335, 363-403, 422-454, 495-514, and 561-728; these read QLSA…GRTQ, NETD…LNVE, PTHQ…EAEA, SDNA…VKSN, SAPH…ANTG, VGVS…QHYL, and YGYQ…KSSR. The span at 35–46 shows a compositional bias: low complexity; it reads SAAAASAASAAS. Over residues 48–58 the composition is skewed to polar residues; it reads DRTNYSRSHSL. 2 positions are modified to phosphoserine: Ser57 and Ser64. The span at 80-93 shows a compositional bias: low complexity; the sequence is STSSAAPPTSRAAA. Polar residues-rich tracts occupy residues 95–106, 118–132, and 140–171; these read QYSQKTYSLRSQ, YTTN…TSGA, and KNKS…GRTQ. Phosphoserine is present on residues Ser127, Ser151, and Ser155. A compositionally biased stretch (basic and acidic residues) spans 251 to 261; that stretch reads HLQDDSELNVE. Positions 309–326 are enriched in basic residues; the sequence is IHNKRKQASTTRRKKRPP. Phosphoserine is present on Ser363. Composition is skewed to polar residues over residues 363 to 373 and 385 to 403; these read SDNASAPLGSN and TLRS…VKSN. Residues 590 to 634 show a composition bias toward polar residues; the sequence is EGVTTAKPSSNEGVMTNPVVTDSPSPLQQQIDSTTASSNGQSQGN. The segment covering 635-646 has biased composition (low complexity); the sequence is VPTSAVASTTRT. At Thr646 the chain carries Phosphothreonine. 3 stretches are compositionally biased toward polar residues: residues 654–668, 675–684, and 691–708; these read NLKS…QTPQ, DPTTSSTNEL, and MVTS…TQDP. Ser660 bears the Phosphoserine mark. The segment covering 711–728 has biased composition (basic residues); it reads KHKKSSFFTKLFKKKSSR.

Its subcellular location is the cell membrane. May be involved in the control of meiotic sister-chromatid recombination. The chain is Meiotic sister-chromatid recombination protein 3 (MSC3) from Saccharomyces cerevisiae (strain ATCC 204508 / S288c) (Baker's yeast).